A 455-amino-acid chain; its full sequence is Hydroxymethylglutaryl-CoA synthase 2 (455 aa).

Catalysis depends on Glu86, which acts as the Proton donor/acceptor. The active-site Acyl-thioester intermediate is Cys120. Cys120, Thr161, Ser211, His255, Lys264, Asn329, and Ser363 together coordinate (3S)-3-hydroxy-3-methylglutaryl-CoA. The Proton donor/acceptor role is filled by His255.

It belongs to the thiolase-like superfamily. HMG-CoA synthase family.

It carries out the reaction acetoacetyl-CoA + acetyl-CoA + H2O = (3S)-3-hydroxy-3-methylglutaryl-CoA + CoA + H(+). The protein operates within metabolic intermediate biosynthesis; (R)-mevalonate biosynthesis; (R)-mevalonate from acetyl-CoA: step 2/3. This enzyme condenses acetyl-CoA with acetoacetyl-CoA to form HMG-CoA, which is the substrate for HMG-CoA reductase. The protein is Hydroxymethylglutaryl-CoA synthase 2 (HMGCS-2) of Blattella germanica (German cockroach).